We begin with the raw amino-acid sequence, 420 residues long: Probable glycosyltransferase YdaM (420 aa).

Helical transmembrane passes span 4–24 (TLFF…MFLM), 299–319 (IIFD…GVIM), 332–352 (LHLS…FLFM), and 371–391 (FFIV…LVIY).

Belongs to the glycosyltransferase 2 family.

The protein localises to the cell membrane. This Bacillus subtilis (strain 168) protein is Probable glycosyltransferase YdaM (ydaM).